The sequence spans 40 residues: Adenylate kinase (40 aa).

An ATP-binding site is contributed by 10–15 (GAGKGT). The interval 30–40 (STGDMFIKAIK) is NMP. Residue threonine 31 participates in AMP binding.

This sequence belongs to the adenylate kinase family. Monomer.

The protein resides in the cytoplasm. The catalysed reaction is AMP + ATP = 2 ADP. It participates in purine metabolism; AMP biosynthesis via salvage pathway; AMP from ADP: step 1/1. Catalyzes the reversible transfer of the terminal phosphate group between ATP and AMP. Plays an important role in cellular energy homeostasis and in adenine nucleotide metabolism. This Staphylococcus carnosus protein is Adenylate kinase (adk).